The chain runs to 293 residues: Group 3 late-embryogenesis abundant protein, mitochondrial (293 aa).

The N-terminal 31 residues, 1–31, are a transit peptide targeting the mitochondrion; that stretch reads MFLARNAGRAGYRGVVAYQQAASFSVSSAKA. Residues 27–43 show a composition bias toward low complexity; it reads SSAKAAGSRSSGGSDAG. Positions 27–52 are disordered; sequence SSAKAAGSRSSGGSDAGDYAREAAEH. 9 LEA 11-mer repeat repeats span residues 58-68, 83-93, 123-133, 134-144, 145-155, 160-170, 171-181, 199-209, and 210-220; these read KDLKNEASWKA, KDTVKEGVHDM, KNAAQDTAATL, KDKAGSAWNQA, KHVVEDKGEDV, KDTASKVWGKA, KHVAEDVKENA, KDKAADVLSGA, and KHTAENLAHKA. The interval 217–293 is disordered; it reads AHKAQAAIHD…KGPGQAGGRR (77 aa). The span at 230–265 shows a compositional bias: low complexity; sequence SSGSQSQSQSQSQYRQGQQQGRQDQQQSKSQWGQTS. Residues 279 to 293 are compositionally biased toward gly residues; it reads GPQGGKGPGQAGGRR.

It belongs to the LEA type 4 family.

Its subcellular location is the mitochondrion. Functionally, mitochondrial heat soluble protein acting as a molecular shield in water-deficient condition. The chain is Group 3 late-embryogenesis abundant protein, mitochondrial from Ramazzottius varieornatus (Water bear).